A 586-amino-acid chain; its full sequence is DNA-directed RNA polymerase subunit beta' (586 aa).

The Zn(2+) site is built by cysteine 64, cysteine 66, cysteine 85, and cysteine 88. Mg(2+)-binding residues include aspartate 448, aspartate 450, and aspartate 452.

It belongs to the RNA polymerase beta' chain family. RpoC1 subfamily. In plastids the minimal PEP RNA polymerase catalytic core is composed of four subunits: alpha, beta, beta', and beta''. When a (nuclear-encoded) sigma factor is associated with the core the holoenzyme is formed, which can initiate transcription. It depends on Mg(2+) as a cofactor. Zn(2+) is required as a cofactor.

It is found in the plastid. Its subcellular location is the chloroplast. The enzyme catalyses RNA(n) + a ribonucleoside 5'-triphosphate = RNA(n+1) + diphosphate. In terms of biological role, DNA-dependent RNA polymerase catalyzes the transcription of DNA into RNA using the four ribonucleoside triphosphates as substrates. This chain is DNA-directed RNA polymerase subunit beta', found in Euglena gracilis.